Reading from the N-terminus, the 234-residue chain is Lactate utilization protein C 1 (234 aa).

This sequence belongs to the LutC/YkgG family.

In terms of biological role, is involved in L-lactate degradation and allows cells to grow with lactate as the sole carbon source. In Bacillus mycoides (strain KBAB4) (Bacillus weihenstephanensis), this protein is Lactate utilization protein C 1.